Here is a 315-residue protein sequence, read N- to C-terminus: MSLVEKNTASEDAFALSEATARDYLVLLKPRVMSLVVFTGLVGLVLAPGHMNPVLAVISILCIAVGAGASGALNMWYDADIDAVMKRTRKRPIPAGIIAPNQVLAFGLTLSAFSVMTLGLMVNWLAAALLAFTIFFYAVIYTMWLKRSTPQNIVIGGAAGAFPPMIGWAAATGEITWDSLVLFMIIFLWTPPHFWALSLFTTNDYEAARIPMMPNVKGELSTRRQALFYAVLMAPVGVLPWVMGFAGMFYGVVSTLLGLAFVYYAWRLWAADSQPQMLAAARKLFRFSLLYLAGIFAVLLFEALTFKLLAAFGVF.

9 helical membrane-spanning segments follow: residues 32–52 (VMSL…GHMN), 53–73 (PVLA…SGAL), 93–113 (IPAG…LSAF), 120–140 (LMVN…YAVI), 153–173 (IVIG…AATG), 180–200 (LVLF…LSLF), 226–246 (ALFY…MGFA), 249–269 (FYGV…WRLW), and 295–315 (IFAV…FGVF).

Belongs to the UbiA prenyltransferase family. Protoheme IX farnesyltransferase subfamily.

Its subcellular location is the cell inner membrane. The catalysed reaction is heme b + (2E,6E)-farnesyl diphosphate + H2O = Fe(II)-heme o + diphosphate. Its pathway is porphyrin-containing compound metabolism; heme O biosynthesis; heme O from protoheme: step 1/1. In terms of biological role, converts heme B (protoheme IX) to heme O by substitution of the vinyl group on carbon 2 of heme B porphyrin ring with a hydroxyethyl farnesyl side group. In Brucella canis (strain ATCC 23365 / NCTC 10854 / RM-666), this protein is Protoheme IX farnesyltransferase.